A 238-amino-acid polypeptide reads, in one-letter code: Uridylate kinase (238 aa).

12 to 15 is an ATP binding site; the sequence is KLSG. An involved in allosteric activation by GTP region spans residues 20 to 25; sequence GEKGFG. Glycine 54 contributes to the UMP binding site. 2 residues coordinate ATP: glycine 55 and arginine 59. UMP contacts are provided by residues aspartate 72 and 133-140; that span reads TGNPYFST. ATP contacts are provided by tyrosine 166 and aspartate 169.

It belongs to the UMP kinase family. In terms of assembly, homohexamer.

The protein resides in the cytoplasm. It carries out the reaction UMP + ATP = UDP + ADP. It participates in pyrimidine metabolism; CTP biosynthesis via de novo pathway; UDP from UMP (UMPK route): step 1/1. Its activity is regulated as follows. Allosterically activated by GTP. Inhibited by UTP. Catalyzes the reversible phosphorylation of UMP to UDP. The polypeptide is Uridylate kinase (Clostridium botulinum (strain Hall / ATCC 3502 / NCTC 13319 / Type A)).